The following is a 457-amino-acid chain: MSRTYFGTDGIRGAVGQAPITPDFVLRLGHAVGRVLKSQQTSPASRPTVLIGKDTRISGYMLESALEAGFASAGVDVLLTGPLPTPGVAYLTRALRLSLGVVISASHNPYGDNGIKFFSAKGEKLPDSWEQQVEATVEEAAQWVDSSGLGKARRLDDAQGRYIEFCKSTVAGELSLKGLKLVVDGAHGAAYQVAPAVFHELGAEVISIGCNPNGLNINDGFGATHPEALVSAVQAHQADYGIALDGDADRLQLVDATGRLYNGDELLYLMTLDRLAAEPSEDAAPSRVGVPGVVGTLMTNLAVEQALAARGVAFVRAKVGDRYVLEELLARGWQLGGEGSGHLIALDKHTTGDGLVSALQVLQAVVRSGRTLAQLLEGLTLFPQVLLNVRLQPGQDWKASAALAEAQRESLAELGERGRILIRPSGTEPLLRVMVEASDAALAQRCAQRMADAVRRA.

Ser106 serves as the catalytic Phosphoserine intermediate. Ser106, Asp245, Asp247, and Asp249 together coordinate Mg(2+). Position 106 is a phosphoserine (Ser106).

The protein belongs to the phosphohexose mutase family. The cofactor is Mg(2+). In terms of processing, activated by phosphorylation.

The enzyme catalyses alpha-D-glucosamine 1-phosphate = D-glucosamine 6-phosphate. Catalyzes the conversion of glucosamine-6-phosphate to glucosamine-1-phosphate. The polypeptide is Phosphoglucosamine mutase (Methylibium petroleiphilum (strain ATCC BAA-1232 / LMG 22953 / PM1)).